The following is a 173-amino-acid chain: Crossover junction endodeoxyribonuclease RuvC (173 aa).

Active-site residues include aspartate 8, glutamate 67, and aspartate 139. Mg(2+) contacts are provided by aspartate 8, glutamate 67, and aspartate 139.

The protein belongs to the RuvC family. Homodimer which binds Holliday junction (HJ) DNA. The HJ becomes 2-fold symmetrical on binding to RuvC with unstacked arms; it has a different conformation from HJ DNA in complex with RuvA. In the full resolvosome a probable DNA-RuvA(4)-RuvB(12)-RuvC(2) complex forms which resolves the HJ. Mg(2+) serves as cofactor.

Its subcellular location is the cytoplasm. It carries out the reaction Endonucleolytic cleavage at a junction such as a reciprocal single-stranded crossover between two homologous DNA duplexes (Holliday junction).. Its function is as follows. The RuvA-RuvB-RuvC complex processes Holliday junction (HJ) DNA during genetic recombination and DNA repair. Endonuclease that resolves HJ intermediates. Cleaves cruciform DNA by making single-stranded nicks across the HJ at symmetrical positions within the homologous arms, yielding a 5'-phosphate and a 3'-hydroxyl group; requires a central core of homology in the junction. The consensus cleavage sequence is 5'-(A/T)TT(C/G)-3'. Cleavage occurs on the 3'-side of the TT dinucleotide at the point of strand exchange. HJ branch migration catalyzed by RuvA-RuvB allows RuvC to scan DNA until it finds its consensus sequence, where it cleaves and resolves the cruciform DNA. In Vibrio atlanticus (strain LGP32) (Vibrio splendidus (strain Mel32)), this protein is Crossover junction endodeoxyribonuclease RuvC.